Here is a 513-residue protein sequence, read N- to C-terminus: Glucose-1-phosphate adenylyltransferase small subunit, chloroplastic/amyloplastic (513 aa).

The transit peptide at 1–64 (MAMAAAASPS…RRPFFFSPRA (64 aa)) directs the protein to the chloroplast.

It belongs to the bacterial/plant glucose-1-phosphate adenylyltransferase family. Heterotetramer. Leaves and starchy endosperm.

Its subcellular location is the plastid. The protein localises to the chloroplast. It localises to the amyloplast. It carries out the reaction alpha-D-glucose 1-phosphate + ATP + H(+) = ADP-alpha-D-glucose + diphosphate. Its pathway is glycan biosynthesis; starch biosynthesis. With respect to regulation, activated by 3'phosphoglycerate, inhibited by orthophosphate. Allosteric regulation. In terms of biological role, this protein plays a role in synthesis of starch. It catalyzes the synthesis of the activated glycosyl donor, ADP-glucose from Glc-1-P and ATP. This is Glucose-1-phosphate adenylyltransferase small subunit, chloroplastic/amyloplastic from Hordeum vulgare (Barley).